Reading from the N-terminus, the 63-residue chain is Overexpressed in colon carcinoma 1 protein homolog (63 aa).

A compositionally biased stretch (low complexity) spans 1 to 12 (MGCGNSTAASAG). Positions 1–40 (MGCGNSTAASAGAGQGPAGAAKDVTEESITEDDKRRNYGG) are disordered.

Belongs to the OCC1 family.

The chain is Overexpressed in colon carcinoma 1 protein homolog from Bos taurus (Bovine).